Here is a 361-residue protein sequence, read N- to C-terminus: G2/mitotic-specific cyclin-B (361 aa).

It belongs to the cyclin family. Cyclin AB subfamily.

In terms of biological role, essential for the control of the cell cycle at the G2/M (mitosis) transition. Interacts with the CDC2 protein kinase to form MPF. G2/M cyclins accumulate steadily during G2 and are abruptly destroyed at mitosis. The polypeptide is G2/mitotic-specific cyclin-B (Hydra vulgaris (Hydra)).